The sequence spans 334 residues: Glycerol-3-phosphate dehydrogenase [NAD(P)+] (334 aa).

Residues S14, Y15, H35, and K109 each coordinate NADPH. Sn-glycerol 3-phosphate is bound by residues K109, G138, and T140. A142 lines the NADPH pocket. Residues K194, D247, S257, R258, and N259 each coordinate sn-glycerol 3-phosphate. The active-site Proton acceptor is the K194. R258 is a binding site for NADPH. 2 residues coordinate NADPH: V282 and E284.

The protein belongs to the NAD-dependent glycerol-3-phosphate dehydrogenase family.

The protein resides in the cytoplasm. It carries out the reaction sn-glycerol 3-phosphate + NAD(+) = dihydroxyacetone phosphate + NADH + H(+). The enzyme catalyses sn-glycerol 3-phosphate + NADP(+) = dihydroxyacetone phosphate + NADPH + H(+). The protein operates within membrane lipid metabolism; glycerophospholipid metabolism. Catalyzes the reduction of the glycolytic intermediate dihydroxyacetone phosphate (DHAP) to sn-glycerol 3-phosphate (G3P), the key precursor for phospholipid synthesis. The protein is Glycerol-3-phosphate dehydrogenase [NAD(P)+] of Psychromonas ingrahamii (strain DSM 17664 / CCUG 51855 / 37).